Here is a 174-residue protein sequence, read N- to C-terminus: Larval cuticle protein LCP-22 (174 aa).

The signal sequence occupies residues 1-16 (MKFAVVFACMVAAVAA). A Chitin-binding type R&amp;R domain is found at 82-153 (DGSYTYFYET…PTGNAIPTSP (72 aa)).

Component of the cuticle of the larva of Bombyx mori. The protein is Larval cuticle protein LCP-22 (LCP22) of Bombyx mori (Silk moth).